An 887-amino-acid polypeptide reads, in one-letter code: ATP-dependent DNA helicase srs2 (887 aa).

Residues 9–304 form the UvrD-like helicase ATP-binding domain; that stretch reads KFLNEEQRIS…LHLERNYRSA (296 aa). ATP-binding positions include 33 to 38 and arginine 302; that span reads GSGKTR. The UvrD-like helicase C-terminal domain occupies 305–597; the sequence is KPILELALSI…TISTLHAAKG (293 aa).

This sequence belongs to the helicase family. UvrD subfamily.

It localises to the nucleus. The catalysed reaction is Couples ATP hydrolysis with the unwinding of duplex DNA by translocating in the 3'-5' direction.. It catalyses the reaction ATP + H2O = ADP + phosphate + H(+). Its function is as follows. ATP-dependent DNA helicase involved in DNA repair at least for UV-induced lesions. Also aids the recombinational repair of camptothecin-induced collapsed replication forks. This is ATP-dependent DNA helicase srs2 (srs2) from Schizosaccharomyces pombe (strain 972 / ATCC 24843) (Fission yeast).